A 107-amino-acid polypeptide reads, in one-letter code: Nucleoid-associated protein Hhal_0231 (107 aa).

Disordered stretches follow at residues 1 to 24 (MKGGLGNIMKQAQKMQEDMQKAQE) and 82 to 107 (VQRESQERMSGMAEGMGLPPGMKLPF). Over residues 15–24 (MQEDMQKAQE) the composition is skewed to basic and acidic residues.

Belongs to the YbaB/EbfC family. In terms of assembly, homodimer.

The protein resides in the cytoplasm. Its subcellular location is the nucleoid. Binds to DNA and alters its conformation. May be involved in regulation of gene expression, nucleoid organization and DNA protection. This chain is Nucleoid-associated protein Hhal_0231, found in Halorhodospira halophila (strain DSM 244 / SL1) (Ectothiorhodospira halophila (strain DSM 244 / SL1)).